The following is a 36-amino-acid chain: Photosystem I reaction center subunit VIII (36 aa).

A helical membrane pass occupies residues 10-30 (FVPLVGLVFSAIIMVLSFLYI).

This sequence belongs to the PsaI family.

It localises to the plastid. The protein resides in the chloroplast thylakoid membrane. Functionally, may help in the organization of the PsaL subunit. The chain is Photosystem I reaction center subunit VIII from Welwitschia mirabilis (Tree tumbo).